Reading from the N-terminus, the 240-residue chain is MADIRITGRMVNFTRLTFDTNDHDAIRQQLTSILNEGSYQGTVVILDSTVEQELIALIQLLISLGLQPMAVIDGILSDEAKAIQFPVLPADQPLQRIKASKEEITVIATPKAADTTPETKTPITKTAIAHKTSYHDEILRTGQCLVQDHGDIILNAGMNSGSEVIASGNIHIYGNVRGRIIAGAGGNPSARIFCHALEAELVSIAGTYCVAEDIPKDVLKKSVHIYLNDNQELEFRALEF.

This sequence belongs to the MinC family. In terms of assembly, interacts with MinD and FtsZ.

Functionally, cell division inhibitor that blocks the formation of polar Z ring septums. Rapidly oscillates between the poles of the cell to destabilize FtsZ filaments that have formed before they mature into polar Z rings. Prevents FtsZ polymerization. The chain is Probable septum site-determining protein MinC from Acinetobacter baylyi (strain ATCC 33305 / BD413 / ADP1).